A 320-amino-acid chain; its full sequence is Probable cysteine protease atg4 (320 aa).

Cys-74 acts as the Nucleophile in catalysis. Active-site residues include Asp-232 and His-234.

This sequence belongs to the peptidase C54 family.

It localises to the cytoplasm. The protein resides in the nucleus. Its subcellular location is the preautophagosomal structure. The enzyme catalyses [protein]-C-terminal L-amino acid-glycyl-phosphatidylethanolamide + H2O = [protein]-C-terminal L-amino acid-glycine + a 1,2-diacyl-sn-glycero-3-phosphoethanolamine. Functionally, cysteine protease that plays a key role in cytoplasm to vacuole transport (Cvt) and autophagy by mediating both proteolytic activation and delipidation of atg8. Required for selective autophagic degradation of the nucleus (nucleophagy) as well as for mitophagy which contributes to regulate mitochondrial quantity and quality by eliminating the mitochondria to a basal level to fulfill cellular energy requirements and preventing excess ROS production. The protease activity is required for proteolytic activation of atg8: cleaves the C-terminal amino acid of atg8 to reveal a C-terminal glycine. Atg8 ubiquitin-like activity requires the exposure of the glycine at the C-terminus for its conjugation to phosphatidylethanolamine (PE) and its insertion to membranes, which is necessary for autophagy. The atg8-PE conjugate mediates tethering between adjacent membranes and stimulates membrane hemifusion, leading to expansion of the autophagosomal membrane during autophagy. In addition to the protease activity, also catalyzes deconjugation of PE-conjugated forms of atg8 during macroautophagy: atg8 delipidation is required to release the protein from membranes, which facilitates multiple events during macroautophagy, and especially for efficient autophagosome biogenesis, the assembly of atg9-containing tubulovesicular clusters into phagophores/autophagosomes, and for the disassembly of PAS-associated ATG components. Atg8 delipidation by atg4 also recycles atg8-PE generated on inappropriate membranes to maintain a reservoir of unlipidated atg8 that is required for autophagosome formation at the PAS. Plays a role in meiosis and sporulation. This Schizosaccharomyces pombe (strain 972 / ATCC 24843) (Fission yeast) protein is Probable cysteine protease atg4 (atg4).